The primary structure comprises 431 residues: Ribosomal protein uS12 methylthiotransferase RimO (431 aa).

The region spanning 4-120 (HKLFLLSLGC…ILAALGAAYH (117 aa)) is the MTTase N-terminal domain. Cys13, Cys49, Cys83, Cys144, Cys148, and Cys151 together coordinate [4Fe-4S] cluster. The Radical SAM core domain maps to 130–359 (LTPPHYTYLK…MELQESVSQD (230 aa)). The 68-residue stretch at 362-429 (RDFEGKEITV…PFDLVGEVIG (68 aa)) folds into the TRAM domain.

It belongs to the methylthiotransferase family. RimO subfamily. The cofactor is [4Fe-4S] cluster.

The protein resides in the cytoplasm. The catalysed reaction is L-aspartate(89)-[ribosomal protein uS12]-hydrogen + (sulfur carrier)-SH + AH2 + 2 S-adenosyl-L-methionine = 3-methylsulfanyl-L-aspartate(89)-[ribosomal protein uS12]-hydrogen + (sulfur carrier)-H + 5'-deoxyadenosine + L-methionine + A + S-adenosyl-L-homocysteine + 2 H(+). Functionally, catalyzes the methylthiolation of an aspartic acid residue of ribosomal protein uS12. This is Ribosomal protein uS12 methylthiotransferase RimO from Pelodictyon phaeoclathratiforme (strain DSM 5477 / BU-1).